The primary structure comprises 136 residues: Large ribosomal subunit protein uL16 (136 aa).

Belongs to the universal ribosomal protein uL16 family. Part of the 50S ribosomal subunit.

Its function is as follows. Binds 23S rRNA and is also seen to make contacts with the A and possibly P site tRNAs. This is Large ribosomal subunit protein uL16 from Elusimicrobium minutum (strain Pei191).